The following is a 1041-amino-acid chain: Probable rhamnogalacturonate lyase C (1041 aa).

Residues 1–21 (MFASTLRKTFVFLGLATYSAA) form the signal peptide. N-linked (GlcNAc...) asparagine glycans are attached at residues asparagine 28, asparagine 94, asparagine 116, asparagine 142, asparagine 231, asparagine 283, asparagine 528, and asparagine 634. Positions 703–728 (ISRPCPRKGGTRRRKKERKKEGKKQG) are disordered. Positions 707–720 (CPRKGGTRRRKKER) are enriched in basic residues. N-linked (GlcNAc...) asparagine glycosylation is present at asparagine 864.

This sequence belongs to the polysaccharide lyase 4 family.

The protein resides in the secreted. The catalysed reaction is Endotype eliminative cleavage of L-alpha-rhamnopyranosyl-(1-&gt;4)-alpha-D-galactopyranosyluronic acid bonds of rhamnogalacturonan I domains in ramified hairy regions of pectin leaving L-rhamnopyranose at the reducing end and 4-deoxy-4,5-unsaturated D-galactopyranosyluronic acid at the non-reducing end.. In terms of biological role, pectinolytic enzymes consist of four classes of enzymes: pectin lyase, polygalacturonase, pectin methylesterase and rhamnogalacturonase. Degrades the rhamnogalacturonan I (RG-I) backbone of pectin. The protein is Probable rhamnogalacturonate lyase C (rglC) of Emericella nidulans (strain FGSC A4 / ATCC 38163 / CBS 112.46 / NRRL 194 / M139) (Aspergillus nidulans).